A 50-amino-acid polypeptide reads, in one-letter code: Light-harvesting protein B-870 beta chain (50 aa).

Topologically, residues 2-22 are cytoplasmic; the sequence is ADNTDLSFTGLTDEQAQELHS. A bacteriochlorophyll contacts are provided by histidine 21 and histidine 39. Residues 23–45 traverse the membrane as a helical segment; sequence VYMSGLFLFAAVAVVAHLATYIW. Over 46-50 the chain is Periplasmic; the sequence is RPWFG.

The protein belongs to the antenna complex beta subunit family. The core complex is formed by different alpha and beta chains, binding bacteriochlorophyll molecules, and arranged most probably in tetrameric structures disposed around the reaction center. The non-pigmented gamma chains may constitute additional components.

Its subcellular location is the cell inner membrane. Its function is as follows. Antenna complexes are light-harvesting systems, which transfer the excitation energy to the reaction centers. In Roseobacter denitrificans (strain ATCC 33942 / OCh 114) (Erythrobacter sp. (strain OCh 114)), this protein is Light-harvesting protein B-870 beta chain (pufB).